The chain runs to 588 residues: Proteasome-associated ATPase (588 aa).

Over residues 1-10 the composition is skewed to basic and acidic residues; it reads MAAHDDDINR. The disordered stretch occupies residues 1-22; the sequence is MAAHDDDINRGTRPARGSEDPA. Positions 47-94 form a coiled coil; sequence RILEERIVELQTNLAGVSAQNERLANTLREARDQIVALKEEVDRLAQP. 276-281 lines the ATP pocket; sequence GCGKTL. The docks into pockets in the proteasome alpha-ring stretch occupies residues 587-588; the sequence is YL.

The protein belongs to the AAA ATPase family. Homohexamer. Assembles into a hexameric ring structure that caps the 20S proteasome core. Strongly interacts with the prokaryotic ubiquitin-like protein Pup through a hydrophobic interface; the interacting region of ARC lies in its N-terminal coiled-coil domain. There is one Pup binding site per ARC hexamer ring. Upon ATP-binding, the C-terminus of ARC interacts with the alpha-rings of the proteasome core, possibly by binding to the intersubunit pockets.

It participates in protein degradation; proteasomal Pup-dependent pathway. Functionally, ATPase which is responsible for recognizing, binding, unfolding and translocation of pupylated proteins into the bacterial 20S proteasome core particle. May be essential for opening the gate of the 20S proteasome via an interaction with its C-terminus, thereby allowing substrate entry and access to the site of proteolysis. Thus, the C-termini of the proteasomal ATPase may function like a 'key in a lock' to induce gate opening and therefore regulate proteolysis. The chain is Proteasome-associated ATPase from Streptomyces griseus subsp. griseus (strain JCM 4626 / CBS 651.72 / NBRC 13350 / KCC S-0626 / ISP 5235).